Reading from the N-terminus, the 197-residue chain is Protein RESISTANCE TO PHYTOPHTHORA 1, chloroplastic (197 aa).

A chloroplast-targeting transit peptide spans 1 to 52; the sequence is MSWSLCSTHGVSSSIALTYGFRHRRRSTFRIFATSDGLEPKDDPPESPLPSS. Positions 35–56 are disordered; the sequence is SDGLEPKDDPPESPLPSSSSAL. The next 4 membrane-spanning stretches (helical) occupy residues 93 to 113, 120 to 140, 150 to 170, and 173 to 193; these read FEVQ…NLLF, LWRL…LRAR, LNYL…FWKS, and LVWS…LGWL.

It is found in the plastid. The protein localises to the chloroplast. Its subcellular location is the membrane. Functionally, plays a positive role in the immune response to the oomycetes P.brassicae, including induced oxidative burst (e.g. H(2)O(2)) and enhanced expression of defense-related genes. The chain is Protein RESISTANCE TO PHYTOPHTHORA 1, chloroplastic from Arabidopsis thaliana (Mouse-ear cress).